The primary structure comprises 213 residues: tRNA (guanine-N(7)-)-methyltransferase (213 aa).

Residues glutamate 44, glutamate 69, aspartate 96, and aspartate 118 each coordinate S-adenosyl-L-methionine. Aspartate 118 is a catalytic residue. Substrate is bound by residues lysine 122, aspartate 154, and 191 to 194 (TEYE).

The protein belongs to the class I-like SAM-binding methyltransferase superfamily. TrmB family.

It carries out the reaction guanosine(46) in tRNA + S-adenosyl-L-methionine = N(7)-methylguanosine(46) in tRNA + S-adenosyl-L-homocysteine. The protein operates within tRNA modification; N(7)-methylguanine-tRNA biosynthesis. In terms of biological role, catalyzes the formation of N(7)-methylguanine at position 46 (m7G46) in tRNA. The sequence is that of tRNA (guanine-N(7)-)-methyltransferase from Exiguobacterium sibiricum (strain DSM 17290 / CCUG 55495 / CIP 109462 / JCM 13490 / 255-15).